A 447-amino-acid polypeptide reads, in one-letter code: Rab GDP dissociation inhibitor alpha (447 aa).

Phosphoserine is present on S427.

It belongs to the Rab GDI family. Interacts with RHOH. Interacts with the non-phosphorylated forms of RAB1A, RAB3A, RAB5A, RAB5B, RAB5C, RAB8A, RAB8B, RAB10, RAB12, RAB35, and RAB43. High expression in brain, lower in other tissues.

Its subcellular location is the cytoplasm. It is found in the golgi apparatus. The protein resides in the trans-Golgi network. In terms of biological role, regulates the GDP/GTP exchange reaction of most Rab proteins by inhibiting the dissociation of GDP from them, and the subsequent binding of GTP to them. Promotes the dissociation of GDP-bound Rab proteins from the membrane and inhibits their activation. Promotes the dissociation of RAB1A, RAB3A, RAB5A and RAB10 from membranes. In Rattus norvegicus (Rat), this protein is Rab GDP dissociation inhibitor alpha (Gdi1).